The following is a 643-amino-acid chain: Threonine--tRNA ligase (643 aa).

Positions 1-65 constitute a TGS domain; the sequence is MIHITLPDGS…NKDMPLSIVT (65 aa). The interval 246–537 is catalytic; it reads DHRKLGRELD…LIEQHAGAMP (292 aa). Positions 337, 388, and 514 each coordinate Zn(2+).

The protein belongs to the class-II aminoacyl-tRNA synthetase family. In terms of assembly, homodimer. Zn(2+) serves as cofactor.

The protein resides in the cytoplasm. It catalyses the reaction tRNA(Thr) + L-threonine + ATP = L-threonyl-tRNA(Thr) + AMP + diphosphate + H(+). Its function is as follows. Catalyzes the attachment of threonine to tRNA(Thr) in a two-step reaction: L-threonine is first activated by ATP to form Thr-AMP and then transferred to the acceptor end of tRNA(Thr). Also edits incorrectly charged L-seryl-tRNA(Thr). This chain is Threonine--tRNA ligase, found in Delftia acidovorans (strain DSM 14801 / SPH-1).